The following is a 381-amino-acid chain: 6-oxocyclohex-1-ene-1-carbonyl-CoA hydrolase (381 aa).

Belongs to the enoyl-CoA hydratase/isomerase family. Homohexamer.

The enzyme catalyses 6-oxocyclohex-1-ene-1-carbonyl-CoA + 2 H2O = 3-hydroxy-6-carboxyhexanoyl-CoA + H(+). It participates in aromatic compound metabolism; benzoyl-CoA degradation. Functionally, involved in the central benzoyl-CoA catabolism. Catalyzes the addition of one molecule of water to the double bond and the hydrolytic cleavage of C-C bond in the alicyclic ring, 6-oxocyclohex-1-ene-1-carbonyl-CoA (6-OCH-CoA) to yield 3-hydroxypimelyl-CoA. This is 6-oxocyclohex-1-ene-1-carbonyl-CoA hydrolase from Geobacter metallireducens (strain ATCC 53774 / DSM 7210 / GS-15).